The following is a 335-amino-acid chain: GIPYWTYNNGDEPLVAISLLDTSNIANQLDSTPRVFYLGGNPEVEFPETQEEQQERHQQKHSLPVGRRGGQHQQEEESEEQKDGNSVLSGFSSEFLAQTFNTEEDTAKRLRSPRDKRNQIVRVEGGLRIINPEGQQEEEEEEEEEKQRSEQGRNGLEETICSLKIRENIAQPARADLYNPRAGSISTANSLTLPILRYLRLSAEYVRLYRNGIYAPHWNINANSLLYVIRGEGRVRIVNSQGNAVFDNKVRKGQLVVVPQNFVVAEQAGEEEGLEYLVFKTNDRAAVSHVQQVFRATPADVLANAFGLRQRQVTELKLSGNRGPLVHPQSQSQSN.

Disordered stretches follow at residues 47–87 (PETQ…GNSV) and 102–155 (TEED…GRNG). Basic and acidic residues predominate over residues 105-118 (DTAKRLRSPRDKRN). Over residues 135–144 (QQEEEEEEEE) the composition is skewed to acidic residues. Residues 167-314 (ENIAQPARAD…AFGLRQRQVT (148 aa)) form the Cupin type-1 domain.

The protein belongs to the 11S seed storage protein (globulins) family. Hexamer; each subunit is composed of an acidic and a basic chain derived from a single precursor and linked by a disulfide bond.

In terms of biological role, this protein found in the seeds of many leguminous and non-leguminous plants is the source of sulfur-containing amino acids in seed meals. The protein is Legumin type B (LEB2) of Vicia faba (Broad bean).